Reading from the N-terminus, the 265-residue chain is Orotidine 5'-phosphate decarboxylase (265 aa).

Residues D37, 59 to 61, 91 to 100, Y217, and R236 each bind substrate; these read KTH and DRKFADIGNT. The active-site Proton donor is the K93.

The protein belongs to the OMP decarboxylase family.

It carries out the reaction orotidine 5'-phosphate + H(+) = UMP + CO2. It functions in the pathway pyrimidine metabolism; UMP biosynthesis via de novo pathway; UMP from orotate: step 2/2. The chain is Orotidine 5'-phosphate decarboxylase (URA3) from Saccharomycopsis fibuligera (Yeast).